Here is a 546-residue protein sequence, read N- to C-terminus: MGPDNRRILLATVLSVGILILWQVIFPTKKAPPKPAHPPAAEVAKPAAPASPAPGAAAPAVPAPPPDAPEETVTLAGKGFEATLTTYGGALKSLRLEGDKFRKQEKDREVQIDLVHVTSGQPYPLSLSASPELGGAVDVAADPGARAPMRIVANDASSVTFEGRVGNLAARKTFRVTGKPYELALDVELSGGAGSGTVGVLYPAFMPPDTKSGGIFSGPPLDFVRPVCRAGTTTERFDLAKEGAPEKLEGQVSWAGVDQHYFVAAVLPAEPIGTCTFVRGPVKGAGLAAVAVPVEGGARKLSLTVYAGPKDLDTLRGYGRGFESAIDYGAVAKFFALFARGLLYVMRWLEAIVRNWGVAIILLTVLVRLVLFPLTYKSMQSMNEMRKLQPEIEKLKAKFGDDREKMNLAVMQLYQKHKVNPLGGCLPMLLQMPVWFALYAALQTSVELYREPFLWMKDLTAHDPYFILPIAMGISSFVMQKLSPQPADNAQAKMMLYFFPGFFTVIMLFVPGGLTLYIFVNNLLSIVQQQLMMKHQQAAPAPAAGK.

Residues 8 to 28 form a helical membrane-spanning segment; that stretch reads ILLATVLSVGILILWQVIFPT. Positions 31–70 are disordered; it reads APPKPAHPPAAEVAKPAAPASPAPGAAAPAVPAPPPDAPE. The span at 39–60 shows a compositional bias: low complexity; that stretch reads PAAEVAKPAAPASPAPGAAAPA. 5 helical membrane-spanning segments follow: residues 326-346, 356-376, 422-442, 459-479, and 498-518; these read IDYG…LYVM, WGVA…PLTY, LGGC…YAAL, LTAH…SFVM, and FFPG…TLYI.

This sequence belongs to the OXA1/ALB3/YidC family. Type 1 subfamily. As to quaternary structure, interacts with the Sec translocase complex via SecD. Specifically interacts with transmembrane segments of nascent integral membrane proteins during membrane integration.

The protein localises to the cell inner membrane. Required for the insertion and/or proper folding and/or complex formation of integral membrane proteins into the membrane. Involved in integration of membrane proteins that insert both dependently and independently of the Sec translocase complex, as well as at least some lipoproteins. Aids folding of multispanning membrane proteins. This chain is Membrane protein insertase YidC, found in Anaeromyxobacter dehalogenans (strain 2CP-1 / ATCC BAA-258).